The chain runs to 377 residues: Meiotic driver cw9 (377 aa).

Disordered regions lie at residues 1-49 (MKNK…DLNN) and 64-100 (NKST…GTTD). Basic and acidic residues predominate over residues 11–29 (SMDEMSAKNDNEIDLEKGP). Helical transmembrane passes span 105–125 (FLIK…PAVC), 142–162 (WTLF…LTYF), 172–192 (VTII…AQCV), 218–238 (VVII…RSKF), 252–272 (CSIS…FWTL), 276–296 (FSGL…TKGL), and 306–326 (ATGY…LFFY).

Belongs to the WTF family. As to quaternary structure, homomer. Forms protein aggregates. The two isoforms can interact with each other and with themselves. High sequence similarity is required for their interaction.

It is found in the spore membrane. It localises to the vacuole membrane. The protein resides in the ascus epiplasm. The protein localises to the cytoplasm. Its subcellular location is the endoplasmic reticulum membrane. In terms of biological role, promotes unequal transmission of alleles from the parental zygote to progeny spores by acting as poison/antidote system where the poison and antidote proteins are produced from the same locus; the poison component is trans-acting and targets all spores within an ascus whereas the antidote component is spore-specific, leading to poisoning of all progeny that do not inherit the allele. Localizes isoform 2 to the vacuole thereby facilitating its degradation. Functionally, forms toxic aggregates that disrupt spore maturation. This is Meiotic driver cw9 from Schizosaccharomyces pombe (Fission yeast).